Consider the following 239-residue polypeptide: Purine nucleoside phosphorylase DeoD-type (239 aa).

An a purine D-ribonucleoside-binding site is contributed by His5. Phosphate contacts are provided by residues Gly21, Arg25, Arg44, and 88 to 91 (RVGS). A purine D-ribonucleoside contacts are provided by residues 180–182 (EME) and 204–205 (SD). Residue Asp205 is the Proton donor of the active site.

The protein belongs to the PNP/UDP phosphorylase family. Homohexamer; trimer of homodimers.

It carries out the reaction a purine D-ribonucleoside + phosphate = a purine nucleobase + alpha-D-ribose 1-phosphate. The catalysed reaction is a purine 2'-deoxy-D-ribonucleoside + phosphate = a purine nucleobase + 2-deoxy-alpha-D-ribose 1-phosphate. Its function is as follows. Catalyzes the reversible phosphorolytic breakdown of the N-glycosidic bond in the beta-(deoxy)ribonucleoside molecules, with the formation of the corresponding free purine bases and pentose-1-phosphate. This chain is Purine nucleoside phosphorylase DeoD-type, found in Myxococcus xanthus (strain DK1622).